We begin with the raw amino-acid sequence, 558 residues long: uncharacterized protein (558 aa).

Helical transmembrane passes span 15 to 32 (PSVTQTIIILSLVCALGL), 39 to 61 (IGTISLGITFVFFVGILASHFGV), 76 to 95 (LVIFVYALGLQVGPSFFPSL), 104 to 126 (LISLGLVLLTFLLCILLYYILGI), and 166 to 188 (MALACAVTYPLGVVGVIIALALL). 2 RCK C-terminal domains span residues 196–278 (EERD…LFGK) and 286–370 (RPDI…ILGD). The next 5 helical transmembrane spans lie at 383–405 (LFGGLVLGCVFGMIPFYLPGVSM), 409–426 (LGLAGGPIIIGILMGAFG), 446–468 (FGIILYLGGLGLASGANFFDTII), 473–495 (LLWVGAGFLITMLPTLLVGWASI), and 533–555 (VVYATVYPLSMFVRIIFAQIMIL).

The protein belongs to the AAE transporter (TC 2.A.81) family.

It is found in the cell membrane. This is an uncharacterized protein from Porphyromonas gingivalis (strain ATCC BAA-308 / W83).